A 734-amino-acid chain; its full sequence is MALRFPRFSQGLAQDPTTRRIWFGIATAHDFESHDDITEERLYQNIFASHFGQLAIIFLWTSGNLFHVAWQGNFESWVQDPLHVRPIAHAIWDPHFGQPAVEAFTRGGALGPVNIAYSGVYQWWYTIGLRTNEDLYTGALFLLFLSAISLIAGWLHLQPKWKPSVSWFKNAESRLNHHLSGLFGVSSLAWTGHLVHVAIPGARGEYVRWNNFLDVLPHPQGLAPLFTGQWNLYAQNPDSSSHLFGTSQGAGTAILTLLGGFHPQTQSLWLTDIAHHHLAIAFIFLVAGHMYRTNFGIGHSMKDLLEAHIPPGGRLGRGHKGLYDTINNSIHFQLGLALASLGVITSLVAQHMYSLPAYAFIAQDFTTQAALYTHHQYIAGFIMTGAFAHGAIFFIRDYNPEQNEDNVLARMLDHKEAIISHLSWASLFLGFHTLGLYVHNDVMLAFGTPEKQILIEPIFAQWIQSAHGKTSYGFDVLLSSTNGPAFNAGRSIWLPGWLNAVNENSNSLFLTIGPGDFLVHHAIALGLHTTTLILVKGALDARGSKLMPDKKDFGYSFPCDGPGRGGTCDISAWDAFYLAVFWMLNTIGWVTFYWHWKHITLWQGNVSQFNESSTYLMGWLRDYLWLNSSQLINGYNPFGTNSLSVWAWMFLFGHLVWATGFMFLISWRGYWQELIETLAWAHERTPLANLIRWRDKPVALSIVQARLVGLAHFSVGYIFTYAAFLIASTSGKFG.

8 consecutive transmembrane segments (helical) span residues 46–69, 135–158, 175–199, 273–291, 330–353, 369–395, 417–439, and 517–535; these read IFAS…FHVA, LYTG…LHLQ, LNHH…HVAI, IAHH…GHMY, IHFQ…QHMY, AALY…IFFI, AIIS…LYVH, and FLVH…LILV. Positions 559 and 568 each coordinate [4Fe-4S] cluster. 2 helical membrane-spanning segments follow: residues 575-596 and 643-665; these read AFYL…YWHW and LSVW…MFLI. Chlorophyll a is bound by residues H654, M662, and Y670. W671 serves as a coordination point for phylloquinone. Residues 707–727 traverse the membrane as a helical segment; the sequence is LVGLAHFSVGYIFTYAAFLIA.

The protein belongs to the PsaA/PsaB family. As to quaternary structure, the PsaA/B heterodimer binds the P700 chlorophyll special pair and subsequent electron acceptors. PSI consists of a core antenna complex that captures photons, and an electron transfer chain that converts photonic excitation into a charge separation. The eukaryotic PSI reaction center is composed of at least 11 subunits. P700 is a chlorophyll a/chlorophyll a' dimer, A0 is one or more chlorophyll a, A1 is one or both phylloquinones and FX is a shared 4Fe-4S iron-sulfur center. serves as cofactor.

The protein localises to the plastid. Its subcellular location is the chloroplast thylakoid membrane. It catalyses the reaction reduced [plastocyanin] + hnu + oxidized [2Fe-2S]-[ferredoxin] = oxidized [plastocyanin] + reduced [2Fe-2S]-[ferredoxin]. PsaA and PsaB bind P700, the primary electron donor of photosystem I (PSI), as well as the electron acceptors A0, A1 and FX. PSI is a plastocyanin-ferredoxin oxidoreductase, converting photonic excitation into a charge separation, which transfers an electron from the donor P700 chlorophyll pair to the spectroscopically characterized acceptors A0, A1, FX, FA and FB in turn. Oxidized P700 is reduced on the lumenal side of the thylakoid membrane by plastocyanin. The polypeptide is Photosystem I P700 chlorophyll a apoprotein A2 (Calycanthus floridus var. glaucus (Eastern sweetshrub)).